A 354-amino-acid polypeptide reads, in one-letter code: uncharacterized protein (354 aa).

Positions 96-130 are disordered; that stretch reads QVCPASAPNGKRAMKIPKVKEPRGENSSKKSSADQ. A compositionally biased stretch (basic and acidic residues) spans 113-127; sequence KVKEPRGENSSKKSS.

This is an uncharacterized protein from Caenorhabditis elegans.